A 290-amino-acid polypeptide reads, in one-letter code: N-acetylmannosamine kinase (290 aa).

ATP contacts are provided by residues 6-13 (ALDIGGTK) and 132-139 (GVGGGIIL). 4 residues coordinate Zn(2+): His-156, Cys-166, Cys-168, and Cys-173.

Belongs to the ROK (NagC/XylR) family. NanK subfamily. In terms of assembly, homodimer.

The catalysed reaction is an N-acyl-D-mannosamine + ATP = an N-acyl-D-mannosamine 6-phosphate + ADP + H(+). It functions in the pathway amino-sugar metabolism; N-acetylneuraminate degradation; D-fructose 6-phosphate from N-acetylneuraminate: step 2/5. In terms of biological role, catalyzes the phosphorylation of N-acetylmannosamine (ManNAc) to ManNAc-6-P. This Yersinia pestis (strain Pestoides F) protein is N-acetylmannosamine kinase.